A 236-amino-acid polypeptide reads, in one-letter code: Small ribosomal subunit protein uS2c (236 aa).

This sequence belongs to the universal ribosomal protein uS2 family.

The protein resides in the plastid. In Cuscuta gronovii (Common dodder), this protein is Small ribosomal subunit protein uS2c (rps2).